The chain runs to 447 residues: MDEEYDVIVLGTGLTECILSGIMSVNGKKVLHMDRNPYYGGESSSITPLEELYKRFQILEGPPESMGRGRDWNVDLIPKFLMANGQLVKMLLYTEVTRYLDFKVVEGSFVYKGGKIYKVPSTETEALASNLMGMFEKRRFRKFLVFVANFDENDPKTFEGVDPQNTSMRDVYRKFDLGQDVIDFTGHALALYRTDDYLDQPCLETINRIKLYSESLARYGKSPYLYPLYGLGELPQGFARLSAIYGGTYMLNKPVDDIIMENGKVVGVKSEGEVARCKQLICDPSYIPDRVQKAGQVIRIICILSHPIKNTNDANSCQIIIPQNQVNRKSDIYVCMISYAHNVAAQGKYIAIASTTVETAEPEKEVEPALELLEPIDQKFVAISDLYEPIDDGSESQVFCSCSYDATTHFETTCNDIKDIYKRMAGSAFDFENMKRKQNDVFGEADQ.

Position 427 is a phosphoserine (Ser427).

The protein belongs to the Rab GDI family. In terms of assembly, interacts with RHOH. Interacts with the non-phosphorylated forms of RAB1A, RAB3A, RAB5A, RAB5B, RAB5C, RAB8A, RAB8B, RAB12, RAB35, and RAB43. Interacts with RAB10. In terms of tissue distribution, high expression in brain, lower in other tissues.

It is found in the cytoplasm. Its subcellular location is the golgi apparatus. It localises to the trans-Golgi network. Regulates the GDP/GTP exchange reaction of most Rab proteins by inhibiting the dissociation of GDP from them, and the subsequent binding of GTP to them. Promotes the dissociation of GDP-bound Rab proteins from the membrane and inhibits their activation. Promotes the dissociation of RAB1A, RAB3A, RAB5A and RAB10 from membranes. In Mus musculus (Mouse), this protein is Rab GDP dissociation inhibitor alpha (Gdi1).